We begin with the raw amino-acid sequence, 832 residues long: WD repeat-containing protein 75 (832 aa).

WD repeat units follow at residues 4 to 43 (QCQI…KVYS), 47 to 86 (EECI…KLWD), 90 to 131 (GILI…QLVS), 145 to 184 (KEIS…YYFK), 193 to 230 (LKAT…RLWR), 236 to 275 (KEYT…VQWP), 278 to 317 (SEEK…SIID), 323 to 361 (SGII…QFYS), 375 to 424 (QQEF…KLWE), 431 to 477 (SFVL…KVWM), 490 to 528 (SWLC…TVWE), 532 to 572 (WDLK…CCWN), and 577 to 614 (ALEW…FLFQ). A disordered region spans residues 764-798 (SQSTEESKEDEEMKSEHSEADSSDETEEMESQKRF).

As to quaternary structure, component of the proposed t-UTP subcomplex of the ribosomal small subunit (SSU) processome. SSU processome is composed of more than 70 proteins and the RNA chaperone small nucleolar RNA (snoRNA) U3.

It localises to the nucleus. Its subcellular location is the nucleolus. In terms of biological role, ribosome biogenesis factor. Part of the small subunit (SSU) processome, first precursor of the small eukaryotic ribosomal subunit. During the assembly of the SSU processome in the nucleolus, many ribosome biogenesis factors, an RNA chaperone and ribosomal proteins associate with the nascent pre-rRNA and work in concert to generate RNA folding, modifications, rearrangements and cleavage as well as targeted degradation of pre-ribosomal RNA by the RNA exosome. Involved in nucleolar processing of pre-18S ribosomal RNA. Required for optimal pre-ribosomal RNA transcription by RNA polymerase I. The polypeptide is WD repeat-containing protein 75 (wdr75) (Xenopus laevis (African clawed frog)).